A 132-amino-acid chain; its full sequence is MMNDIIADALTRIRNAAMRRLEVATLLHSNTVVGVLNVLLQKEYIAGFKVIDGQNNKKTIQVELKYDDNEKSVINEITRVSKPGRRVYKSASEIKNFKNGYGTIIVSTNKGVIANDEAYAANVGGEVLCTVW.

This sequence belongs to the universal ribosomal protein uS8 family. As to quaternary structure, part of the 30S ribosomal subunit. Contacts proteins S5 and S12.

Functionally, one of the primary rRNA binding proteins, it binds directly to 16S rRNA central domain where it helps coordinate assembly of the platform of the 30S subunit. This chain is Small ribosomal subunit protein uS8, found in Aliarcobacter butzleri (strain RM4018) (Arcobacter butzleri).